We begin with the raw amino-acid sequence, 305 residues long: Homoserine kinase (305 aa).

93-103 (PLSRGLGSSAT) provides a ligand contact to ATP.

This sequence belongs to the GHMP kinase family. Homoserine kinase subfamily.

Its subcellular location is the cytoplasm. The catalysed reaction is L-homoserine + ATP = O-phospho-L-homoserine + ADP + H(+). It functions in the pathway amino-acid biosynthesis; L-threonine biosynthesis; L-threonine from L-aspartate: step 4/5. In terms of biological role, catalyzes the ATP-dependent phosphorylation of L-homoserine to L-homoserine phosphate. The sequence is that of Homoserine kinase from Picosynechococcus sp. (strain ATCC 27264 / PCC 7002 / PR-6) (Agmenellum quadruplicatum).